Here is a 594-residue protein sequence, read N- to C-terminus: Ferredoxin--nitrite reductase, chloroplastic (594 aa).

The N-terminal 32 residues, 1-32, are a transit peptide targeting the chloroplast; that stretch reads MASLPVNKIIPSSTTLLSSSNNNRRRNNSSIR. The span at 13–22 shows a compositional bias: low complexity; sequence STTLLSSSNN. Residues 13–36 form a disordered region; that stretch reads STTLLSSSNNNRRRNNSSIRCQKA. Residues Cys-473, Cys-479, Cys-514, and Cys-518 each contribute to the [4Fe-4S] cluster site. Residue Cys-518 coordinates siroheme.

It belongs to the nitrite and sulfite reductase 4Fe-4S domain family. In terms of assembly, monomer. Requires siroheme as cofactor. [4Fe-4S] cluster is required as a cofactor.

Its subcellular location is the plastid. The protein localises to the chloroplast. The enzyme catalyses 6 oxidized [2Fe-2S]-[ferredoxin] + NH4(+) + 2 H2O = nitrite + 6 reduced [2Fe-2S]-[ferredoxin] + 8 H(+). It functions in the pathway nitrogen metabolism; nitrate reduction (assimilation). The polypeptide is Ferredoxin--nitrite reductase, chloroplastic (NIR) (Spinacia oleracea (Spinach)).